Consider the following 367-residue polypeptide: tRNA/tmRNA (uracil-C(5))-methyltransferase (367 aa).

Q190, Y218, N223, E239, and D299 together coordinate S-adenosyl-L-methionine. The Nucleophile role is filled by C324. E358 serves as the catalytic Proton acceptor.

It belongs to the class I-like SAM-binding methyltransferase superfamily. RNA M5U methyltransferase family. TrmA subfamily.

It carries out the reaction uridine(54) in tRNA + S-adenosyl-L-methionine = 5-methyluridine(54) in tRNA + S-adenosyl-L-homocysteine + H(+). The enzyme catalyses uridine(341) in tmRNA + S-adenosyl-L-methionine = 5-methyluridine(341) in tmRNA + S-adenosyl-L-homocysteine + H(+). Its function is as follows. Dual-specificity methyltransferase that catalyzes the formation of 5-methyluridine at position 54 (m5U54) in all tRNAs, and that of position 341 (m5U341) in tmRNA (transfer-mRNA). This chain is tRNA/tmRNA (uracil-C(5))-methyltransferase, found in Erwinia tasmaniensis (strain DSM 17950 / CFBP 7177 / CIP 109463 / NCPPB 4357 / Et1/99).